Consider the following 137-residue polypeptide: Putative nucleoside diphosphate kinase (137 aa).

Positions 45, 73, 79, 90, and 100 each coordinate ATP. The active-site Pros-phosphohistidine intermediate is His-103.

Belongs to the NDK family. Mg(2+) is required as a cofactor.

The catalysed reaction is a 2'-deoxyribonucleoside 5'-diphosphate + ATP = a 2'-deoxyribonucleoside 5'-triphosphate + ADP. It catalyses the reaction a ribonucleoside 5'-diphosphate + ATP = a ribonucleoside 5'-triphosphate + ADP. Its function is as follows. Major role in the synthesis of nucleoside triphosphates other than ATP. The ATP gamma phosphate is transferred to the NDP beta phosphate via a ping-pong mechanism, using a phosphorylated active-site intermediate. The sequence is that of Putative nucleoside diphosphate kinase (NME2P1) from Homo sapiens (Human).